We begin with the raw amino-acid sequence, 574 residues long: C6 finger transcription factor poxB (574 aa).

Positions 19–51 form a DNA-binding region, zn(2)-C6 fungal-type; the sequence is CDRCRGQKLRCERPVSNSSTTPCRRCLKAHVRC. Disordered regions lie at residues 111–133, 242–262, and 376–404; these read PRRL…GRTR, SSLQ…ESRH, and LNQT…SASA.

Its subcellular location is the nucleus. In terms of biological role, transcription factor that positively regulates the expression of the gene cluster that mediates the biosynthesis of oxaleimides, cytotoxic compounds containing an unusual disubstituted succinimide moiety. This chain is C6 finger transcription factor poxB, found in Penicillium oxalicum.